A 483-amino-acid chain; its full sequence is 23S rRNA (uracil(1939)-C(5))-methyltransferase RlmD (483 aa).

Over residues 1–11 (MTGLGKRRPAR) the composition is skewed to basic residues. Residues 1–36 (MTGLGKRRPARSRSGVSGLRERRQPASVERSAGSEG) are disordered. A TRAM domain is found at 29 to 90 (ERSAGSEGRR…KRFDEAHVSE (62 aa)). The [4Fe-4S] cluster site is built by cysteine 103, cysteine 109, cysteine 112, and cysteine 189. S-adenosyl-L-methionine-binding residues include glutamine 298, phenylalanine 332, asparagine 337, glutamate 353, aspartate 379, and aspartate 401. The Nucleophile role is filled by cysteine 427.

The protein belongs to the class I-like SAM-binding methyltransferase superfamily. RNA M5U methyltransferase family. RlmD subfamily.

It carries out the reaction uridine(1939) in 23S rRNA + S-adenosyl-L-methionine = 5-methyluridine(1939) in 23S rRNA + S-adenosyl-L-homocysteine + H(+). Functionally, catalyzes the formation of 5-methyl-uridine at position 1939 (m5U1939) in 23S rRNA. This chain is 23S rRNA (uracil(1939)-C(5))-methyltransferase RlmD, found in Halomonas elongata (strain ATCC 33173 / DSM 2581 / NBRC 15536 / NCIMB 2198 / 1H9).